The primary structure comprises 905 residues: uncharacterized protein (905 aa).

4 WD repeats span residues 42 to 82, 86 to 128, 136 to 175, and 177 to 217; these read RSLK…FQAV, GYAR…SDPK, STLD…DSVS, and VNTQ…SDNY. Phosphoserine is present on residues serine 394 and serine 397.

Belongs to the WD repeat mio family.

This is an uncharacterized protein from Schizosaccharomyces pombe (strain 972 / ATCC 24843) (Fission yeast).